We begin with the raw amino-acid sequence, 170 residues long: TFIIB-type zinc finger protein (170 aa).

The TFIIB-type zinc finger occupies 1–30; that stretch reads MECPVCGSNEIVWDNKNGEVVCSNCGIIID. Zn(2+) is bound by residues Cys-3, Cys-6, Cys-22, and Cys-25.

This sequence belongs to the TFIIB family. It depends on Zn(2+) as a cofactor.

This is TFIIB-type zinc finger protein from Saccharolobus shibatae (strain ATCC 51178 / DSM 5389 / JCM 8931 / NBRC 15437 / B12) (Sulfolobus shibatae).